Reading from the N-terminus, the 285-residue chain is NADPH-dependent 7-cyano-7-deazaguanine reductase (285 aa).

91–93 is a binding site for substrate; it reads IES. Residue 93 to 94 participates in NADPH binding; it reads SK. The active-site Thioimide intermediate is the Cys193. The active-site Proton donor is Asp200. 232–233 provides a ligand contact to substrate; sequence HE. 261–262 is an NADPH binding site; the sequence is RG.

This sequence belongs to the GTP cyclohydrolase I family. QueF type 2 subfamily. As to quaternary structure, homodimer.

It is found in the cytoplasm. The catalysed reaction is 7-aminomethyl-7-carbaguanine + 2 NADP(+) = 7-cyano-7-deazaguanine + 2 NADPH + 3 H(+). It functions in the pathway tRNA modification; tRNA-queuosine biosynthesis. Catalyzes the NADPH-dependent reduction of 7-cyano-7-deazaguanine (preQ0) to 7-aminomethyl-7-deazaguanine (preQ1). The polypeptide is NADPH-dependent 7-cyano-7-deazaguanine reductase (Shewanella frigidimarina (strain NCIMB 400)).